The sequence spans 529 residues: Bifunctional purine biosynthesis protein PurH (529 aa).

Positions T2 to T149 constitute an MGS-like domain.

The protein belongs to the PurH family.

The catalysed reaction is (6R)-10-formyltetrahydrofolate + 5-amino-1-(5-phospho-beta-D-ribosyl)imidazole-4-carboxamide = 5-formamido-1-(5-phospho-D-ribosyl)imidazole-4-carboxamide + (6S)-5,6,7,8-tetrahydrofolate. The enzyme catalyses IMP + H2O = 5-formamido-1-(5-phospho-D-ribosyl)imidazole-4-carboxamide. It participates in purine metabolism; IMP biosynthesis via de novo pathway; 5-formamido-1-(5-phospho-D-ribosyl)imidazole-4-carboxamide from 5-amino-1-(5-phospho-D-ribosyl)imidazole-4-carboxamide (10-formyl THF route): step 1/1. The protein operates within purine metabolism; IMP biosynthesis via de novo pathway; IMP from 5-formamido-1-(5-phospho-D-ribosyl)imidazole-4-carboxamide: step 1/1. This chain is Bifunctional purine biosynthesis protein PurH, found in Dinoroseobacter shibae (strain DSM 16493 / NCIMB 14021 / DFL 12).